Reading from the N-terminus, the 684-residue chain is MMDASKELQVLHIDFLNQDNAVSHHTWEFQTSSPVFRRGQVFHLRLVLNQPLQSYHQLKLEFSTGPNPSIAKHTLVVLDPRTPSDHYNWQATLQNESGKEVTVAVTSSPNAILGKYQLNVKTGNHILKSEENILYLLFNPWCKEDMVFMPDEDERKEYILNDTGCHYVGAARSIKCKPWNFGQFEKNVLDCCISLLTESSLKPTDRRDPVLVCRAMCAMMSFEKGQGVLIGNWTGDYEGGTAPYKWTGSAPILQQYYNTKQAVCFGQCWVFAGILTTVLRALGIPARSVTGFDSAHDTERNLTVDTYVNENGEKITSMTHDSVWNFHVWTDAWMKRPDLPKGYDGWQAVDATPQERSQGVFCCGPSPLTAIRKGDIFIVYDTRFVFSEVNGDRLIWLVKMVNGQEELHVISMETTSIGKNISTKAVGQDRRRDITYEYKYPEGSSEERQVMDHAFLLLSSEREHRRPVKENFLHMSVQSDDVLLGNSVNFTVILKRKTAALQNVNILGSFELQLYTGKKMAKLCDLNKTSQIQGQVSEVTLTLDSKTYINSLAILDDEPVIRGFIIAEIVESKEIMASEVFTSFQYPEFSIELPNTGRIGQLLVCNCIFKNTLAIPLTDVKFSLESLGISSLQTSDHGTVQPGETIQSQIKCTPIKTGPKKFIVKLSSKQVKEINAQKIVLITK.

Active-site residues include C268, H327, and D350. Ca(2+)-binding residues include N390, D392, E442, and E447.

The protein belongs to the transglutaminase superfamily. Transglutaminase family. As to quaternary structure, homodimer. The cofactor is Ca(2+). In terms of tissue distribution, prostate.

It carries out the reaction L-glutaminyl-[protein] + L-lysyl-[protein] = [protein]-L-lysyl-N(6)-5-L-glutamyl-[protein] + NH4(+). In terms of biological role, associated with the mammalian reproductive process. Catalyzes the cross-linking of proteins and the conjugation of polyamines to specific proteins in the seminal tract. The chain is Protein-glutamine gamma-glutamyltransferase 4 (TGM4) from Homo sapiens (Human).